Reading from the N-terminus, the 134-residue chain is Small ribosomal subunit protein uS8 (134 aa).

The protein belongs to the universal ribosomal protein uS8 family. As to quaternary structure, part of the 30S ribosomal subunit. Contacts proteins S5 and S12.

Functionally, one of the primary rRNA binding proteins, it binds directly to 16S rRNA central domain where it helps coordinate assembly of the platform of the 30S subunit. This is Small ribosomal subunit protein uS8 from Thermotoga maritima (strain ATCC 43589 / DSM 3109 / JCM 10099 / NBRC 100826 / MSB8).